Consider the following 818-residue polypeptide: Serine/threonine-protein kinase PTK2/STK2 (818 aa).

Polar residues predominate over residues 28–39 (NSSSHTDNSSLL). Disordered regions lie at residues 28–100 (NSSS…GSVS) and 117–177 (NPYL…SHHF). The residue at position 56 (T56) is a Phosphothreonine. The segment covering 57–81 (SPSISGSGSGGNSPSSSAGARQRSA) has biased composition (low complexity). 2 positions are modified to phosphoserine: S59 and S80. Residues 136–160 (TRDRDRAVLDREKEKERARNKERNT) are compositionally biased toward basic and acidic residues. Residues 255 to 562 (DTDNKPIGSG…MDDLFNDPFF (308 aa)) enclose the Protein kinase domain. ATP-binding positions include 261 to 269 (IGSGGSSEV) and K285. D388 serves as the catalytic Proton acceptor. Polar residues predominate over residues 585-595 (STSTNDFSENS). The segment at 585-795 (STSTNDFSEN…SVSSSKKKKV (211 aa)) is disordered. Phosphoserine is present on residues S623 and S632. Basic and acidic residues-rich tracts occupy residues 638–651 (KVKDSAKTKTHDVG) and 659–685 (TKPKQQDKKENLKKDEVKNGDKDKVIE). Residue S694 is modified to Phosphoserine. A Phosphothreonine modification is found at T700. A Phosphoserine modification is found at S711. Over residues 727–736 (TPTTPTHNGP) the composition is skewed to low complexity. Residue T737 is modified to Phosphothreonine. S752, S755, S778, and S781 each carry phosphoserine. Positions 755–767 (SLKSETPASTKNF) are enriched in polar residues. Low complexity predominate over residues 768 to 789 (SAPNVSSSSNSLRSLGSPSVSS).

Belongs to the protein kinase superfamily. Ser/Thr protein kinase family.

The protein localises to the nucleus. It is found in the cytoplasm. It catalyses the reaction L-seryl-[protein] + ATP = O-phospho-L-seryl-[protein] + ADP + H(+). It carries out the reaction L-threonyl-[protein] + ATP = O-phospho-L-threonyl-[protein] + ADP + H(+). In terms of biological role, essential determinant for high-affinity spermidine transport. Required for the activation of the plasma membrane proton pump PMA1 via phosphorylation of 'Ser-899'. This is Serine/threonine-protein kinase PTK2/STK2 (PTK2) from Saccharomyces cerevisiae (strain ATCC 204508 / S288c) (Baker's yeast).